A 788-amino-acid polypeptide reads, in one-letter code: Endonuclease MutS2 (788 aa).

334–341 contributes to the ATP binding site; the sequence is GPNTGGKT. The Smr domain occupies 713–788; the sequence is LDLRGKRYEE…GNGATVVKFQ (76 aa).

The protein belongs to the DNA mismatch repair MutS family. MutS2 subfamily. Homodimer. Binds to stalled ribosomes, contacting rRNA.

Endonuclease that is involved in the suppression of homologous recombination and thus may have a key role in the control of bacterial genetic diversity. In terms of biological role, acts as a ribosome collision sensor, splitting the ribosome into its 2 subunits. Detects stalled/collided 70S ribosomes which it binds and splits by an ATP-hydrolysis driven conformational change. Acts upstream of the ribosome quality control system (RQC), a ribosome-associated complex that mediates the extraction of incompletely synthesized nascent chains from stalled ribosomes and their subsequent degradation. Probably generates substrates for RQC. The chain is Endonuclease MutS2 from Enterococcus faecalis (strain ATCC 700802 / V583).